The sequence spans 161 residues: Type IV major fimbrial protein FimA (161 aa).

The propeptide at 1 to 7 (MKSLQKG) is leader sequence. Residue Phe-8 is modified to N-methylphenylalanine. Residues 8–28 (FTLIELMIVVAIIGILAAFAI) form a helical membrane-spanning segment. Cys-63 and Cys-105 form a disulfide bridge.

This sequence belongs to the N-Me-Phe pilin family. The pili are polar flexible filaments of about 5.4 nanometers diameter and 2.5 micrometers average length; they consist of only a single polypeptide chain arranged in a helical configuration of five subunits per turn in the assembled pilus.

It is found in the fimbrium. Its subcellular location is the membrane. Its function is as follows. Major component of the type IV fimbriae that plays an essential role in twitching motility, natural transformation, and protease secretion. The protein is Type IV major fimbrial protein FimA (fimA) of Dichelobacter nodosus (Bacteroides nodosus).